We begin with the raw amino-acid sequence, 730 residues long: Arginine decarboxylase 1B, chloroplastic (730 aa).

The transit peptide at 1 to 37 (MPALGCCVDAAVSPPPGYSFLWDSSLPAPEIFPSGVP) directs the protein to the chloroplast. Residue Lys-157 is modified to N6-(pyridoxal phosphate)lysine. Pyridoxal 5'-phosphate contacts are provided by residues Ser-309, Gly-346, and 395–398 (ESGR). 460–461 (YA) is a binding site for substrate. Cys-548 acts as the Proton donor; shared with dimeric partner in catalysis. Position 549 (Asp-549) interacts with substrate. Pyridoxal 5'-phosphate is bound at residue Tyr-590.

This sequence belongs to the Orn/Lys/Arg decarboxylase class-II family. SpeA subfamily. Mg(2+) is required as a cofactor. The cofactor is pyridoxal 5'-phosphate.

The protein localises to the plastid. Its subcellular location is the chloroplast. It catalyses the reaction L-arginine + H(+) = agmatine + CO2. It functions in the pathway alkaloid biosynthesis; nicotine biosynthesis. The protein operates within amine and polyamine biosynthesis; agmatine biosynthesis; agmatine from L-arginine: step 1/1. Involved in the biosynthesis of pyridine alkaloid natural products, leading mainly to the production of anabasine, anatabine, nicotine and nornicotine, effective deterrents against herbivores with antiparasitic and pesticide properties (neurotoxins); nornicotine serves as the precursor in the synthesis of the carcinogen compound N'-nitrosonornicotine (NNN). Required for the biosynthesis of putrescine. Catalyzes the first step of polyamine (PA) biosynthesis to produce putrescine from arginine. This is Arginine decarboxylase 1B, chloroplastic from Nicotiana tabacum (Common tobacco).